A 490-amino-acid polypeptide reads, in one-letter code: Protein U94 (490 aa).

Positions 1-210 (MFSIINPSDD…SHFNKKPNVK (210 aa)) constitute a PV NS1-Nuc domain. An SF3 helicase domain is found at 312 to 463 (DPILAGTILY…IPRNFPVIQK (152 aa)). Residue 338–345 (GPPGCGKS) coordinates ATP.

The protein localises to the host nucleus. This is Protein U94 (U94) from Human herpesvirus 6B (HHV-6 variant B).